The primary structure comprises 406 residues: Na(+)/H(+) antiporter NhaA (406 aa).

Transmembrane regions (helical) follow at residues 29–49, 75–95, 111–131, 141–161, 170–190, 195–215, 220–240, 242–262, 278–298, 306–326, 349–369, and 382–402; these read FAGILLIIAFTLAIIVSNNIF, FIELVNDGLMTFFFLLIGLEM, ILPAVAALGGVVVPVLIYMFF, GWAIPIATDTAFVLGILSFFS, AFIIGFSLIDDAFALIILALF, INTPALLISSVIIFILFILNY, QLFYYIIVGLLLWISMVESGI, GTLCGAIIALFIPVNIKGEFN, YFILPLFVFMNSGILLEYFAF, ILALIYGIIFGLFVGKQLGIM, FYSIAILGGIGFTLSLFIGSI, and AAVIIGSLISALFGVAVLKYC.

It belongs to the NhaA Na(+)/H(+) (TC 2.A.33) antiporter family.

It localises to the cell inner membrane. The catalysed reaction is Na(+)(in) + 2 H(+)(out) = Na(+)(out) + 2 H(+)(in). In terms of biological role, na(+)/H(+) antiporter that extrudes sodium in exchange for external protons. This Rickettsia massiliae (strain Mtu5) protein is Na(+)/H(+) antiporter NhaA.